The chain runs to 681 residues: UvrABC system protein B (681 aa).

The region spanning 30–419 (QGVRDGRHWQ…GEVVELLVRP (390 aa)) is the Helicase ATP-binding domain. 43–50 (GVTGSGKT) is a binding site for ATP. A Beta-hairpin motif is present at residues 96–119 (YYDFYQPEAYLPSLDKYIAKDLRI). One can recognise a Helicase C-terminal domain in the interval 435–601 (QIDNLLAEIR…SIVKSVDQIL (167 aa)). In terms of domain architecture, UVR spans 641-676 (YAIVEGLRLEMQEAAEHMEYEKAAYLRDEITKMEQV).

This sequence belongs to the UvrB family. In terms of assembly, forms a heterotetramer with UvrA during the search for lesions. Interacts with UvrC in an incision complex.

The protein resides in the cytoplasm. In terms of biological role, the UvrABC repair system catalyzes the recognition and processing of DNA lesions. A damage recognition complex composed of 2 UvrA and 2 UvrB subunits scans DNA for abnormalities. Upon binding of the UvrA(2)B(2) complex to a putative damaged site, the DNA wraps around one UvrB monomer. DNA wrap is dependent on ATP binding by UvrB and probably causes local melting of the DNA helix, facilitating insertion of UvrB beta-hairpin between the DNA strands. Then UvrB probes one DNA strand for the presence of a lesion. If a lesion is found the UvrA subunits dissociate and the UvrB-DNA preincision complex is formed. This complex is subsequently bound by UvrC and the second UvrB is released. If no lesion is found, the DNA wraps around the other UvrB subunit that will check the other stand for damage. This is UvrABC system protein B from Chlorobium chlorochromatii (strain CaD3).